The chain runs to 78 residues: Sec-independent protein translocase protein TatA (78 aa).

Residues 1–21 (MGGISIWQLLIIAVIVVLLFG) traverse the membrane as a helical segment. Positions 47 to 59 (ESEKKDADFEPKS) are enriched in basic and acidic residues. Residues 47–78 (ESEKKDADFEPKSLEQQNKQAATESKKDKEQA) are disordered. Over residues 60–69 (LEQQNKQAAT) the composition is skewed to polar residues.

It belongs to the TatA/E family. The Tat system comprises two distinct complexes: a TatABC complex, containing multiple copies of TatA, TatB and TatC subunits, and a separate TatA complex, containing only TatA subunits. Substrates initially bind to the TatABC complex, which probably triggers association of the separate TatA complex to form the active translocon.

Its subcellular location is the cell inner membrane. Part of the twin-arginine translocation (Tat) system that transports large folded proteins containing a characteristic twin-arginine motif in their signal peptide across membranes. TatA could form the protein-conducting channel of the Tat system. This Vibrio vulnificus (strain YJ016) protein is Sec-independent protein translocase protein TatA.